The chain runs to 602 residues: Elongation factor 4 (602 aa).

Residues 7–189 (RNIRNFSIIA…AIVQRIPAPQ (183 aa)) form the tr-type G domain. GTP is bound by residues 19–24 (DHGKST) and 136–139 (NKID).

This sequence belongs to the TRAFAC class translation factor GTPase superfamily. Classic translation factor GTPase family. LepA subfamily.

The protein resides in the cell inner membrane. The enzyme catalyses GTP + H2O = GDP + phosphate + H(+). Functionally, required for accurate and efficient protein synthesis under certain stress conditions. May act as a fidelity factor of the translation reaction, by catalyzing a one-codon backward translocation of tRNAs on improperly translocated ribosomes. Back-translocation proceeds from a post-translocation (POST) complex to a pre-translocation (PRE) complex, thus giving elongation factor G a second chance to translocate the tRNAs correctly. Binds to ribosomes in a GTP-dependent manner. In Xylella fastidiosa (strain M23), this protein is Elongation factor 4.